We begin with the raw amino-acid sequence, 278 residues long: Short-chain dehydrogenase/reductase eupG (278 aa).

Residues L19, D71, and N98 each coordinate NADP(+). S155 (proton donor) is an active-site residue. 3 residues coordinate NADP(+): Y188, K192, and T223. The active-site Proton acceptor is Y188. K192 (lowers pKa of active site Tyr) is an active-site residue.

This sequence belongs to the short-chain dehydrogenases/reductases (SDR) family.

It functions in the pathway secondary metabolite biosynthesis; terpenoid biosynthesis. Short-chain dehydrogenase/reductase; part of the gene cluster that mediates the biosynthesis of eupenifeldin, a bistropolone meroterpenoid that acts as an antitumor agent. The first step of eupenifeldin biosynthesis is the biosynthesis of 3-methylorcinaldehyde performed by the non-reducing polyketide synthase eupA. Oxidative dearomatization of 3-methylorcinaldehyde likely catalyzed by the FAD-dependent monooxygenase eupB is followed by oxidative ring expansion by the 2-oxoglutarate-dependent dioxygenase eupC to provide the first tropolone metabolite, tropolone stipitaldehyde. In parallel, generation of sesquiterpene alpha-humulene from farnesylpyrophosphate (FPP) is catalyzed by the terpene cyclase eupE. The cytochrome P450 monooxygenase eupD then hydroxylates humulene to humulenol. The putative Diels-Alderase eupF probably catalyzes the formation of the tropolone-humulene skeleton by linking humulenol and the polyketide moiety. The short-chain dehydrogenase/reductase eupG and the flavin-dependent monooxygenase eupH are also essential for eupenifeldin biosynthesis and are likely the additional decorating enzymes of the tropolone-humulene skeleton to produce final eupenifeldin or derivatives. The polypeptide is Short-chain dehydrogenase/reductase eupG (Phoma sp).